The sequence spans 246 residues: UPF0246 protein stu1967 (246 aa).

It belongs to the UPF0246 family.

The chain is UPF0246 protein stu1967 from Streptococcus thermophilus (strain ATCC BAA-250 / LMG 18311).